We begin with the raw amino-acid sequence, 122 residues long: Probable F-box protein At4g23960 (122 aa).

An F-box domain is found at 1–45 (MIEQLFPEVTCYALRYLDYSSLCQLSMTSSSMRKTANDDVLWRAL).

The sequence is that of Probable F-box protein At4g23960 from Arabidopsis thaliana (Mouse-ear cress).